The primary structure comprises 247 residues: Homeobox-leucine zipper protein HOX15 (247 aa).

The disordered stretch occupies residues 1–44 (MAQDDEDVGLALGLSLGSGGHRRQRESRDEAPSSAAASLLTLRL). Positions 32-44 (PSSAAASLLTLRL) are enriched in low complexity. A DNA-binding region (homeobox) is located at residues 91–150 (NSRKKLRLSKEQSALLEDRFKEHSTLNPKQKVALAKQLNLRPRQVEVWFQNRRARTKLKQ). The segment at 149 to 193 (KQTEVDCELLKRCCETLTEENRRLHRELQQLRALTHSTAAGFFMA) is leucine-zipper. The segment at 221–247 (SPTAAADRTNKPTAPHLFSPFAKSAAC) is disordered.

This sequence belongs to the HD-ZIP homeobox family. Class II subfamily. As to expression, expressed in seedlings, stems, leaf blades and panicles.

The protein localises to the nucleus. Functionally, probable transcription factor. This chain is Homeobox-leucine zipper protein HOX15 (HOX15), found in Oryza sativa subsp. japonica (Rice).